A 223-amino-acid chain; its full sequence is Lipoprotein signal peptidase (223 aa).

Residues 1–20 form a disordered region; sequence MNSAKVNPSGHAPTPAPTAS. Transmembrane regions (helical) follow at residues 32 to 52, 65 to 85, 91 to 111, and 116 to 136; these read LFFGLAIAGGALDLWSKEAIF, WIIEGYFGIETAVNIGAVFGL, LVFAAISVFAAAAIIAWLFFF, and SCWLTFALGCITGGIIGNLYD. Active-site residues include aspartate 156 and aspartate 175. The chain crosses the membrane as a helical span at residues 173-193; it reads IADSLLVTGAIMLLVQSFFFP. Residues 196–223 form a disordered region; the sequence is PHGEADGNELPGRRAPDEPTEGTKPAAS.

This sequence belongs to the peptidase A8 family.

The protein resides in the cell inner membrane. It carries out the reaction Release of signal peptides from bacterial membrane prolipoproteins. Hydrolyzes -Xaa-Yaa-Zaa-|-(S,diacylglyceryl)Cys-, in which Xaa is hydrophobic (preferably Leu), and Yaa (Ala or Ser) and Zaa (Gly or Ala) have small, neutral side chains.. It participates in protein modification; lipoprotein biosynthesis (signal peptide cleavage). This protein specifically catalyzes the removal of signal peptides from prolipoproteins. The sequence is that of Lipoprotein signal peptidase from Rhodopirellula baltica (strain DSM 10527 / NCIMB 13988 / SH1).